Reading from the N-terminus, the 442-residue chain is Phosphatidylserine synthase 2 (442 aa).

Topologically, residues Met1 to Arg40 are cytoplasmic. A helical membrane pass occupies residues Ala41–Glu61. Residues Glu62 to Gly74 lie on the Lumenal side of the membrane. The chain crosses the membrane as a helical span at residues Ile75–Phe95. Residues Ser96–Arg104 are Cytoplasmic-facing. Residues Phe105 to Val125 traverse the membrane as a helical segment. The Lumenal segment spans residues Gln126 to Arg291. Residues Asn159 and Asn215 are each glycosylated (N-linked (GlcNAc...) asparagine). The chain crosses the membrane as a helical span at residues Trp292–Leu312. Position 313 (Lys313) is a topological domain, cytoplasmic. Residues Phe314 to Asn334 traverse the membrane as a helical segment. Topologically, residues Val335–Lys354 are lumenal. Residues Lys355 to Val375 form a helical membrane-spanning segment. The Cytoplasmic segment spans residues Lys376–Thr381. Residues Leu382–Leu402 form a helical membrane-spanning segment. Over Thr403–His442 the chain is Lumenal.

This sequence belongs to the phosphatidyl serine synthase family.

Its subcellular location is the endoplasmic reticulum membrane. The catalysed reaction is a 1,2-diacyl-sn-glycero-3-phosphoethanolamine + L-serine = a 1,2-diacyl-sn-glycero-3-phospho-L-serine + ethanolamine. The enzyme catalyses 1-hexadecanoyl-2-(9Z-octadecenoyl)-sn-glycero-3-phosphoethanolamine + L-serine = 1-hexadecanoyl-2-(9Z-octadecenoyl)-sn-glycero-3-phospho-L-serine + ethanolamine. It carries out the reaction 1-hexadecanoyl-2-(4Z,7Z,10Z,13Z,16Z,19Z-docosahexaenoyl)-sn-glycero-3-phosphoethanolamine + L-serine = 1-hexadecanoyl-2-(4Z,7Z,10Z,13Z,16Z,19Z-docosahexaenoyl)-sn-glycero-3-phosphoserine + ethanolamine. It catalyses the reaction 1-octadecanoyl-2-(5Z,8Z,11Z,14Z)-eicosatetraenoyl-sn-glycero-3-phosphoethanolamine + L-serine = 1-octadecanoyl-2-(5Z,8Z,11Z,14Z)-eicosatetraenoyl-sn-glycero-3-phosphoserine + ethanolamine. The catalysed reaction is 1-octadecanoyl-2-(4Z,7Z,10Z,13Z,16Z,19Z-docosahexaenoyl)-sn-glycero-3-phosphoethanolamine + L-serine = 1-octadecanoyl-2-(4Z,7Z,10Z,13Z,16Z,19Z-docosahexaenoyl)-sn-glycero-3-phosphoserine + ethanolamine. The enzyme catalyses 1-(1Z-octadecenyl)-2-(4Z,7Z,10Z,13Z,16Z,19Z-docosahexaenoyl)-sn-glycero-3-phosphoethanolamine + L-serine = 1-(1Z-octadecenyl)-2-(4Z,7Z,10Z,13Z,16Z,19Z-docosahexaenoyl)-sn-glycero-3-phospho-L-serine + ethanolamine. It carries out the reaction 1-octadecanoyl-2-(9Z-octadecenoyl)-sn-glycero-3-phosphoethanolamine + L-serine = 1-octadecanoyl-2-(9Z-octadecenoyl)-sn-glycero-3-phospho-L-serine + ethanolamine. It catalyses the reaction 1-(1Z-octadecenyl)-2-(9Z-octadecenoyl)-sn-glycero-3-phosphoethanolamine + L-serine = 1-(1Z-octadecenyl)-2-(9Z-octadecenoyl)-sn-glycero-3-phospho-L-serine + ethanolamine. The catalysed reaction is 1-(1Z-octadecenyl)-2-(5Z,8Z,11Z,14Z- eicosatetraenoyl)-sn-glycero-3-phosphoethanolamine + L-serine = 1-(1Z-octadecenyl)-2-(5Z,8Z,11Z,14Z-eicosatetraenoyl)-sn-glycero-3-phospho-L-serine + ethanolamine. The protein operates within phospholipid metabolism; phosphatidylserine biosynthesis. In terms of biological role, catalyzes a base-exchange reaction in which the polar head group of phosphatidylethanolamine (PE) or phosphatidylcholine (PC) is replaced by L-serine. Catalyzes the conversion of phosphatatidylethanolamine and does not act on phosphatidylcholine. Can utilize both phosphatidylethanolamine (PE) plasmalogen and diacyl PE as substrate and the latter is six times better utilized, indicating the importance of an ester linkage at the sn-1 position. Although it shows no sn-1 fatty acyl preference, exhibits significant preference towards docosahexaenoic acid (22:6n-3) compared with 18:1 or 20:4 at the sn-2 position. This Gallus gallus (Chicken) protein is Phosphatidylserine synthase 2 (PTDSS1).